Reading from the N-terminus, the 90-residue chain is uncharacterized protein (90 aa).

Transmembrane regions (helical) follow at residues 17-37 (ILSM…IYLV) and 55-75 (ICFG…WGIA).

It localises to the membrane. This is an uncharacterized protein from Schizosaccharomyces pombe (strain 972 / ATCC 24843) (Fission yeast).